The primary structure comprises 445 residues: Argininosuccinate synthase (445 aa).

Residues Ala-18 to Ser-26 and Ala-44 each bind ATP. Position 100 (Tyr-100) interacts with L-citrulline. 2 residues coordinate ATP: Gly-130 and Thr-132. Positions 132, 136, and 137 each coordinate L-aspartate. Asn-136 contributes to the L-citrulline binding site. ATP is bound at residue Asp-137. L-citrulline contacts are provided by Arg-140 and Ser-193. An ATP-binding site is contributed by Asp-195. Positions 202, 204, and 281 each coordinate L-citrulline.

The protein belongs to the argininosuccinate synthase family. Type 2 subfamily. As to quaternary structure, homotetramer.

The protein resides in the cytoplasm. It catalyses the reaction L-citrulline + L-aspartate + ATP = 2-(N(omega)-L-arginino)succinate + AMP + diphosphate + H(+). Its pathway is amino-acid biosynthesis; L-arginine biosynthesis; L-arginine from L-ornithine and carbamoyl phosphate: step 2/3. This Pasteurella multocida (strain Pm70) protein is Argininosuccinate synthase (argG).